A 460-amino-acid polypeptide reads, in one-letter code: Nucleosome assembly protein 1-like 2 (460 aa).

The segment covering 1–11 (MAESVDHKELS) has biased composition (basic and acidic residues). Disordered stretches follow at residues 1–87 (MAES…DSDR) and 213–238 (DEEE…EDPK). The span at 213 to 223 (DEEEEEEEDDS) shows a compositional bias: acidic residues. Positions 346 to 352 (IKKKQRH) match the Nuclear localization signal motif.

The protein belongs to the nucleosome assembly protein (NAP) family. Brain, specifically expressed in neurons.

The protein localises to the nucleus. In terms of biological role, acidic protein which may be involved in interactions with other proteins or DNA. This Mus musculus (Mouse) protein is Nucleosome assembly protein 1-like 2 (Nap1l2).